A 237-amino-acid polypeptide reads, in one-letter code: Protein VP5 (237 aa).

Residues 1 to 148 lie on the Cytoplasmic side of the membrane; that stretch reads MLSIIRRKTR…TKQRCKANLR (148 aa). Residues 84 to 237 are disordered; sequence SSSKDPDISG…SKLGKSRDIC (154 aa). Basic and acidic residues-rich tracts occupy residues 85-97 and 116-130; these read SSKD…QKDK and SRVR…HEPI. The chain crosses the membrane as a helical span at residues 149 to 165; the sequence is GDSGFVSIGRSNHPKLS. The Extracellular portion of the chain corresponds to 166–237; that stretch reads REDCHNTRVP…SKLGKSRDIC (72 aa). Positions 214 to 231 are enriched in basic residues; it reads RSHRRKKAKTRTKTSKLG.

Its subcellular location is the host membrane. The chain is Protein VP5 (VP5) from Drosophila x virus (isolate Chung/1996) (DXV).